A 326-amino-acid polypeptide reads, in one-letter code: tRNA-dihydrouridine(20/20a) synthase (326 aa).

FMN-binding positions include 11 to 13 (PML) and Q63. The active-site Proton donor is C93. Residues K132, H165, 205-207 (NGG), and 227-228 (GR) contribute to the FMN site.

This sequence belongs to the Dus family. DusA subfamily. FMN serves as cofactor.

It catalyses the reaction 5,6-dihydrouridine(20) in tRNA + NADP(+) = uridine(20) in tRNA + NADPH + H(+). The enzyme catalyses 5,6-dihydrouridine(20) in tRNA + NAD(+) = uridine(20) in tRNA + NADH + H(+). The catalysed reaction is 5,6-dihydrouridine(20a) in tRNA + NADP(+) = uridine(20a) in tRNA + NADPH + H(+). It carries out the reaction 5,6-dihydrouridine(20a) in tRNA + NAD(+) = uridine(20a) in tRNA + NADH + H(+). Catalyzes the synthesis of 5,6-dihydrouridine (D), a modified base found in the D-loop of most tRNAs, via the reduction of the C5-C6 double bond in target uridines. Specifically modifies U20 and U20a in tRNAs. The protein is tRNA-dihydrouridine(20/20a) synthase of Vibrio vulnificus (strain CMCP6).